Reading from the N-terminus, the 381-residue chain is Chymosin (381 aa).

The signal sequence occupies residues 1–16 (MRCLVVLLAALALSQA). Residues 17 to 58 (SGITRIPLHKGKTLRKALKERGLLEDFLQRQQYAVSSKYSSL) constitute a propeptide, activation peptide. The Peptidase A1 domain occupies 74-378 (YFGKIYIGTP…DRANNRVGLA (305 aa)). Asp-92 is a catalytic residue. Cys-105 and Cys-110 form a disulfide bridge. A glycan (N-linked (GlcNAc...) asparagine) is linked at Asn-158. A disulfide bond links Cys-265 and Cys-269. Asp-274 is an active-site residue. An intrachain disulfide couples Cys-308 to Cys-341. N-linked (GlcNAc...) asparagine glycosylation is present at Asn-349.

It belongs to the peptidase A1 family.

The catalysed reaction is Broad specificity similar to that of pepsin A. Clots milk by cleavage of a single 104-Ser-Phe-|-Met-Ala-107 bond in kappa-chain of casein.. In terms of biological role, chymosin is synthesized in the mucosa of the abomasum (fourth stomach) of young (unweaned) ruminants. The enzyme hydrolyzes casein to paracasein. This is Chymosin from Camelus dromedarius (Dromedary).